The following is a 520-amino-acid chain: Cobyric acid synthase (520 aa).

A GATase cobBQ-type domain is found at 257–451; that stretch reads WLTVAAVRLP…VHGLLESDGF (195 aa). The active-site Nucleophile is the Cys338. His443 is an active-site residue.

It belongs to the CobB/CobQ family. CobQ subfamily.

It functions in the pathway cofactor biosynthesis; adenosylcobalamin biosynthesis. In terms of biological role, catalyzes amidations at positions B, D, E, and G on adenosylcobyrinic A,C-diamide. NH(2) groups are provided by glutamine, and one molecule of ATP is hydrogenolyzed for each amidation. The chain is Cobyric acid synthase from Nocardia farcinica (strain IFM 10152).